The following is a 316-amino-acid chain: Aspartate carbamoyltransferase catalytic subunit (316 aa).

Arg-58 and Thr-59 together coordinate carbamoyl phosphate. An L-aspartate-binding site is contributed by Lys-86. Carbamoyl phosphate contacts are provided by Arg-108, His-136, and Gln-139. Positions 169 and 223 each coordinate L-aspartate. Gly-264 and Pro-265 together coordinate carbamoyl phosphate.

This sequence belongs to the aspartate/ornithine carbamoyltransferase superfamily. ATCase family. In terms of assembly, heterododecamer (2C3:3R2) of six catalytic PyrB chains organized as two trimers (C3), and six regulatory PyrI chains organized as three dimers (R2).

It carries out the reaction carbamoyl phosphate + L-aspartate = N-carbamoyl-L-aspartate + phosphate + H(+). Its pathway is pyrimidine metabolism; UMP biosynthesis via de novo pathway; (S)-dihydroorotate from bicarbonate: step 2/3. Functionally, catalyzes the condensation of carbamoyl phosphate and aspartate to form carbamoyl aspartate and inorganic phosphate, the committed step in the de novo pyrimidine nucleotide biosynthesis pathway. The chain is Aspartate carbamoyltransferase catalytic subunit from Dinoroseobacter shibae (strain DSM 16493 / NCIMB 14021 / DFL 12).